We begin with the raw amino-acid sequence, 101 residues long: Large ribosomal subunit protein eL21 (101 aa).

Over residues 1–18 the composition is skewed to basic residues; that stretch reads MVKHSRGYRTRSRSLLRK. The tract at residues 1 to 23 is disordered; sequence MVKHSRGYRTRSRSLLRKSPRER.

Belongs to the eukaryotic ribosomal protein eL21 family.

This chain is Large ribosomal subunit protein eL21, found in Saccharolobus islandicus (strain Y.N.15.51 / Yellowstone #2) (Sulfolobus islandicus).